The primary structure comprises 123 residues: Protein TraJ (123 aa).

In terms of assembly, monomer.

It localises to the cytoplasm. In terms of biological role, transfer of plasmid RP4 during bacterial conjugation requires the plasmid-encoded TraJ protein, which binds to a 19-base pair invert sequence repetition within the transfer origin. TraJ protein is bound to only one side of the DNA helix. This nucleoprotein structure is the initial complex in the pathway to assemble a functional relaxosome. The chain is Protein TraJ (traJ) from Escherichia coli.